Here is a 410-residue protein sequence, read N- to C-terminus: Protein translocase subunit SecY 2 (410 aa).

10 helical membrane passes run 2–22 (ILII…SAAL), 45–65 (FSIM…VQLL), 94–114 (LTLV…NTLT), 125–145 (FTII…MWLG), 147–167 (LITE…GILV), 188–208 (WIRF…IVWF), 241–261 (VIPV…LMFF), 284–304 (GVII…IVQI), 339–359 (YLSL…LLVA), and 366–386 (LQIG…IEIG).

The protein belongs to the SecY/SEC61-alpha family. In terms of assembly, component of the Sec protein translocase complex. Heterotrimer consisting of SecY, SecE and SecG subunits. The heterotrimers can form oligomers, although 1 heterotrimer is thought to be able to translocate proteins. Interacts with the ribosome. Interacts with SecDF, and other proteins may be involved. Interacts with SecA.

Its subcellular location is the cell membrane. In terms of biological role, the central subunit of the protein translocation channel SecYEG. Consists of two halves formed by TMs 1-5 and 6-10. These two domains form a lateral gate at the front which open onto the bilayer between TMs 2 and 7, and are clamped together by SecE at the back. The channel is closed by both a pore ring composed of hydrophobic SecY resides and a short helix (helix 2A) on the extracellular side of the membrane which forms a plug. The plug probably moves laterally to allow the channel to open. The ring and the pore may move independently. This chain is Protein translocase subunit SecY 2, found in Lactobacillus kefiranofaciens subsp. kefiranofaciens.